The sequence spans 257 residues: Acyl-[acyl-carrier-protein]--UDP-N-acetylglucosamine O-acyltransferase (257 aa).

This sequence belongs to the transferase hexapeptide repeat family. LpxA subfamily. Homotrimer.

It localises to the cytoplasm. The enzyme catalyses a (3R)-hydroxyacyl-[ACP] + UDP-N-acetyl-alpha-D-glucosamine = a UDP-3-O-[(3R)-3-hydroxyacyl]-N-acetyl-alpha-D-glucosamine + holo-[ACP]. The protein operates within glycolipid biosynthesis; lipid IV(A) biosynthesis; lipid IV(A) from (3R)-3-hydroxytetradecanoyl-[acyl-carrier-protein] and UDP-N-acetyl-alpha-D-glucosamine: step 1/6. Its function is as follows. Involved in the biosynthesis of lipid A, a phosphorylated glycolipid that anchors the lipopolysaccharide to the outer membrane of the cell. The protein is Acyl-[acyl-carrier-protein]--UDP-N-acetylglucosamine O-acyltransferase of Anaeromyxobacter dehalogenans (strain 2CP-1 / ATCC BAA-258).